We begin with the raw amino-acid sequence, 366 residues long: Growth hormone secretagogue receptor type 1 (366 aa).

Over 1-40 (MWNATPSEEPGFNLTLADLDWDASPGNDSLGDELLQLFPA) the chain is Extracellular. N-linked (GlcNAc...) asparagine glycosylation is found at Asn-13 and Asn-27. A helical transmembrane segment spans residues 41-66 (PLLAGVTATCVALFVVGIAGNLLTML). Residues 67–72 (VVSRFR) are Cytoplasmic-facing. A helical transmembrane segment spans residues 73–96 (ELRTTTNLYLSSMAFSDLLIFLCM). Over 97 to 117 (PLDLVRLWQYRPWNFGDLLCK) the chain is Extracellular. Cysteines 116 and 198 form a disulfide. Residues 118–139 (LFQFVSESCTYATVLTITALSV) traverse the membrane as a helical segment. Over 140–162 (ERYFAICFPLRAKVVVTKGRVKL) the chain is Cytoplasmic. The chain crosses the membrane as a helical span at residues 163–183 (VIFVIWAVAFCSAGPIFVLVG). The Extracellular portion of the chain corresponds to 184–211 (VEHENGTDPWDTNECRPTEFAVRSGLLT). Residues 212–235 (VMVWVSSIFFFLPVFCLTVLYSLI) traverse the membrane as a helical segment. Residues 236–263 (GRKLWRRRRGDAVVGASLRDQNHKQTVK) are Cytoplasmic-facing. A helical membrane pass occupies residues 264–285 (MLAVVVFAFILCWLPFHVGRYL). At 286-302 (FSKSFEPGSLEIAQISQ) the chain is on the extracellular side. A helical membrane pass occupies residues 303–326 (YCNLVSFVLFYLSAAINPILYNIM). Topologically, residues 327–366 (SKKYRVAVFRLLGFEPFSQRKLSTLKDESSRAWTESSINT) are cytoplasmic.

This sequence belongs to the G-protein coupled receptor 1 family. As to expression, pituitary and hypothalamus.

It localises to the cell membrane. Functionally, receptor for ghrelin, coupled to G-alpha-11 proteins. Stimulates growth hormone secretion. Also binds other growth hormone releasing peptides (GHRP) (e.g. Met-enkephalin and GHRP-6) as well as non-peptide, low molecular weight secretagogues (e.g. L-692,429, MK-0677, adenosine). The protein is Growth hormone secretagogue receptor type 1 (GHSR) of Homo sapiens (Human).